Reading from the N-terminus, the 170-residue chain is Large ribosomal subunit protein uL5 (170 aa).

It belongs to the universal ribosomal protein uL5 family. In terms of assembly, part of the 50S ribosomal subunit; contacts the 5S rRNA and probably tRNA. Forms a bridge to the 30S subunit in the 70S ribosome.

Functionally, this is one of the proteins that bind and probably mediate the attachment of the 5S RNA into the large ribosomal subunit, where it forms part of the central protuberance. In the 70S ribosome it contacts protein S13 of the 30S subunit (bridge B1b), connecting the 2 subunits; this bridge is implicated in subunit movement. May contact the P site tRNA; the 5S rRNA and some of its associated proteins might help stabilize positioning of ribosome-bound tRNAs. This is Large ribosomal subunit protein uL5 from Thermoplasma acidophilum (strain ATCC 25905 / DSM 1728 / JCM 9062 / NBRC 15155 / AMRC-C165).